A 443-amino-acid chain; its full sequence is SURP and G-patch domain-containing protein 1-like protein (443 aa).

Disordered regions lie at residues 45–71 and 83–141; these read IISNPKPAANKISIGLKPNDAQKKGGK and LAPP…TVKK. The SURP motif repeat unit spans residues 142 to 185; that stretch reads VADKLASFVAKHGRPFEHITRQKNPGDTPFKFLFDENCADYKYY. 3 disordered regions span residues 198–221, 241–272, and 285–325; these read QTKDSGVLHSGDAGSRTSTAAIPL, TPVEPGASSRSAQASITRPSDSDSFSGPRGAD, and AQEE…HHMG. Residues 248–265 show a composition bias toward polar residues; sequence SSRSAQASITRPSDSDSF. Positions 285–300 are enriched in basic and acidic residues; it reads AQEEKMRRPRQSKDEM. The segment covering 307–316 has biased composition (polar residues); it reads QGPSETSSTD. A G-patch domain is found at 360-407; sequence ADNVGHKLLSKMGWKEGEGIGSSRKGMADPIMAGDVKTNNLGVGASAP.

The protein resides in the nucleus. In Arabidopsis thaliana (Mouse-ear cress), this protein is SURP and G-patch domain-containing protein 1-like protein.